We begin with the raw amino-acid sequence, 292 residues long: MPWLQIRLAITPDQAGALEDRLLELGAVSVTFMDAEDQPIFEPDLGTTPLWSHTHLLALFEADTDADALLAHLRLLRGGELPEHQVERIKDQDWERSWMDNFQPMRFGRRLWIVPSWHQAPEPGAVNLLLDPGLAFGTGTHPTTALCLEWLDGQELAGRSLLDFGCGSGILAIAALLLGAERAVGTDIDPQALQASRDNALRNGIDPARFPLHLPADLPRQPADVVVANILAGPLVQLAPQLASLVRPGGRLALSGILAEQAGEVRAAYEGAFVLAPTTEKDGWVRIDGVRR.

S-adenosyl-L-methionine is bound by residues T144, G165, D187, and N229.

The protein belongs to the methyltransferase superfamily. PrmA family.

It is found in the cytoplasm. The catalysed reaction is L-lysyl-[protein] + 3 S-adenosyl-L-methionine = N(6),N(6),N(6)-trimethyl-L-lysyl-[protein] + 3 S-adenosyl-L-homocysteine + 3 H(+). Methylates ribosomal protein L11. This Azotobacter vinelandii (strain DJ / ATCC BAA-1303) protein is Ribosomal protein L11 methyltransferase.